Consider the following 20-residue polypeptide: Short cationic peptide-4a (20 aa).

Glu-20 is subject to Glutamic acid 1-amide.

Expressed by the venom gland.

It localises to the secreted. This chain is Short cationic peptide-4a, found in Cupiennius salei (American wandering spider).